A 166-amino-acid polypeptide reads, in one-letter code: Large ribosomal subunit protein uL10 (166 aa).

This sequence belongs to the universal ribosomal protein uL10 family. Part of the ribosomal stalk of the 50S ribosomal subunit. The N-terminus interacts with L11 and the large rRNA to form the base of the stalk. The C-terminus forms an elongated spine to which L12 dimers bind in a sequential fashion forming a multimeric L10(L12)X complex.

Its function is as follows. Forms part of the ribosomal stalk, playing a central role in the interaction of the ribosome with GTP-bound translation factors. The protein is Large ribosomal subunit protein uL10 of Shewanella sediminis (strain HAW-EB3).